Consider the following 213-residue polypeptide: ABA-inducible protein PHV A1 (213 aa).

2 disordered regions span residues 1 to 158 and 182 to 213; these read MASN…KDKT and NTLGMGGDNTSATKDATTGATVKDTTTTTRNH. A compositionally biased stretch (basic and acidic residues) spans 13-23; the sequence is GETKARTEEKT. LEA 11-mer repeat repeat units lie at residues 27–37, 38–48, 49–59, 60–70, 78–88, 89–99, 111–121, 122–132, and 133–143; these read MGATKQKAGQT, TEATKQKAGET, AEATKQKTGET, AEAAKQKAAEA, AQAAKDKTYET, AQAAKERAAQG, TEAAKQKAAET, TEAAKQKAAEA, and TEAAKQKASDT. An 11 X 11 AA tandem repeats of T-E-A-A-K-Q-K-A-A-E-T region spans residues 27-143; sequence MGATKQKAGQ…EAAKQKASDT (117 aa). 3 stretches are compositionally biased toward basic and acidic residues: residues 41–74, 81–98, and 109–140; these read TKQKAGETAEATKQKTGETAEAAKQKAAEAKDKT, AKDKTYETAQAAKERAAQ, and EKTEAAKQKAAETTEAAKQKAAEATEAAKQKA. A compositionally biased stretch (low complexity) spans 193–213; the sequence is ATKDATTGATVKDTTTTTRNH.

It belongs to the LEA type 4 family.

This is ABA-inducible protein PHV A1 (HVA1) from Hordeum vulgare (Barley).